The chain runs to 502 residues: Glycerol kinase (502 aa).

Residue Thr14 coordinates ADP. Positions 14, 15, and 16 each coordinate ATP. Thr14 provides a ligand contact to sn-glycerol 3-phosphate. ADP is bound at residue Arg18. Arg84, Glu85, Tyr136, and Asp246 together coordinate sn-glycerol 3-phosphate. The glycerol site is built by Arg84, Glu85, Tyr136, Asp246, and Gln247. ADP-binding residues include Thr268 and Gly311. Residues Thr268, Gly311, Gln315, and Gly412 each contribute to the ATP site. Gly412 and Asn416 together coordinate ADP.

It belongs to the FGGY kinase family. In terms of assembly, homotetramer and homodimer (in equilibrium). Heterodimer with EIIA-Glc. Binds 1 zinc ion per glycerol kinase EIIA-Glc dimer. The zinc ion is important for dimerization.

It carries out the reaction glycerol + ATP = sn-glycerol 3-phosphate + ADP + H(+). It functions in the pathway polyol metabolism; glycerol degradation via glycerol kinase pathway; sn-glycerol 3-phosphate from glycerol: step 1/1. Activity of this regulatory enzyme is affected by several metabolites. Allosterically and non-competitively inhibited by fructose 1,6-bisphosphate (FBP) and unphosphorylated phosphocarrier protein EIIA-Glc (III-Glc), an integral component of the bacterial phosphotransferase (PTS) system. Key enzyme in the regulation of glycerol uptake and metabolism. Catalyzes the phosphorylation of glycerol to yield sn-glycerol 3-phosphate. The chain is Glycerol kinase from Escherichia coli O81 (strain ED1a).